Consider the following 362-residue polypeptide: UDP-galactose transporter homolog 1 (362 aa).

5 helical membrane passes run 7-27 (IFPVLFCAAGIYASFLTWALV), 45-65 (CPNVIAVVQAVAAVCVGYFYM), 111-131 (LTYMLAKSCKMIPVLLVHLII), 141-161 (SVVAVLVSIGVTIFTIGGSKG), and 175-195 (FFQKASGFLLLFLSLFMDGLT). Asparagine 196 carries an N-linked (GlcNAc...) asparagine glycan. 4 helical membrane passes run 234–254 (HMMFALNFFVAIWNIAYLLVI), 271–291 (IIVSYLLAYALCGSLGQCFIF), 296–316 (LYGSLVLIMITVTRKMMSMLL), and 317–337 (SIIVFGKTVNATQWLGIVIVF).

This sequence belongs to the nucleotide-sugar transporter family. SLC35B subfamily.

The protein resides in the endoplasmic reticulum membrane. In terms of biological role, may be involved in specific transport of UDP-Gal from the cytosol to the Golgi lumen. Involved in the maintenance of optimal conditions for the folding of secretory pathway proteins in the endoplasmic reticulum. This chain is UDP-galactose transporter homolog 1 (HUT1), found in Candida glabrata (strain ATCC 2001 / BCRC 20586 / JCM 3761 / NBRC 0622 / NRRL Y-65 / CBS 138) (Yeast).